The following is a 46-amino-acid chain: uncharacterized protein (46 aa).

This is an uncharacterized protein from Haemophilus influenzae (strain ATCC 51907 / DSM 11121 / KW20 / Rd).